The chain runs to 343 residues: Multidrug resistance protein MdtN (343 aa).

The Cytoplasmic portion of the chain corresponds to 1-12; sequence MESTPKKAPRSK. A helical; Signal-anchor for type II membrane protein transmembrane segment spans residues 13-33; the sequence is FPALLVVALALVALVFVIWRV. Residues 34–343 lie on the Periplasmic side of the membrane; that stretch reads DSAPSTNDAY…ASAVANLEPQ (310 aa).

Belongs to the membrane fusion protein (MFP) (TC 8.A.1) family. In terms of assembly, could be part of a tripartite efflux system composed of MdtN, MdtO and MdtP.

The protein resides in the cell inner membrane. Could be involved in resistance to puromycin, acriflavine and tetraphenylarsonium chloride. The sequence is that of Multidrug resistance protein MdtN (mdtN) from Escherichia coli O157:H7.